The primary structure comprises 218 residues: Thiopurine S-methyltransferase (218 aa).

Trp10, Leu45, Glu66, and Arg123 together coordinate S-adenosyl-L-methionine.

This sequence belongs to the class I-like SAM-binding methyltransferase superfamily. TPMT family.

The protein localises to the cytoplasm. The catalysed reaction is S-adenosyl-L-methionine + a thiopurine = S-adenosyl-L-homocysteine + a thiopurine S-methylether.. The chain is Thiopurine S-methyltransferase from Shewanella sp. (strain MR-7).